Consider the following 252-residue polypeptide: 3-dehydroquinate dehydratase (252 aa).

3-dehydroquinate-binding positions include S21, 46-48 (EWR), and R82. H143 acts as the Proton donor/acceptor in catalysis. Residue K170 is the Schiff-base intermediate with substrate of the active site. 3-dehydroquinate-binding residues include R213, S232, and Q236.

Belongs to the type-I 3-dehydroquinase family. Homodimer.

The enzyme catalyses 3-dehydroquinate = 3-dehydroshikimate + H2O. It participates in metabolic intermediate biosynthesis; chorismate biosynthesis; chorismate from D-erythrose 4-phosphate and phosphoenolpyruvate: step 3/7. In terms of biological role, involved in the third step of the chorismate pathway, which leads to the biosynthesis of aromatic amino acids. Catalyzes the cis-dehydration of 3-dehydroquinate (DHQ) and introduces the first double bond of the aromatic ring to yield 3-dehydroshikimate. This chain is 3-dehydroquinate dehydratase, found in Shigella boydii serotype 4 (strain Sb227).